A 473-amino-acid chain; its full sequence is Photosystem II CP43 reaction center protein (473 aa).

Residues 1-14 constitute a propeptide that is removed on maturation; sequence MKTLYSLRRFYHVE. The residue at position 15 (Thr15) is an N-acetylthreonine. A Phosphothreonine modification is found at Thr15. Helical transmembrane passes span 69–93, 134–155, 178–200, 255–275, and 291–312; these read LFEV…PHLA, LLGP…KDRN, KALY…RKIT, KPFA…LSYS, and WFNN…ASQA. Glu367 is a [CaMn4O5] cluster binding site. A helical membrane pass occupies residues 447 to 471; that stretch reads RARAAAAGFEKGIDRDFEPVLFMTP.

The protein belongs to the PsbB/PsbC family. PsbC subfamily. PSII is composed of 1 copy each of membrane proteins PsbA, PsbB, PsbC, PsbD, PsbE, PsbF, PsbH, PsbI, PsbJ, PsbK, PsbL, PsbM, PsbT, PsbX, PsbY, PsbZ, Psb30/Ycf12, at least 3 peripheral proteins of the oxygen-evolving complex and a large number of cofactors. It forms dimeric complexes. Binds multiple chlorophylls and provides some of the ligands for the Ca-4Mn-5O cluster of the oxygen-evolving complex. It may also provide a ligand for a Cl- that is required for oxygen evolution. PSII binds additional chlorophylls, carotenoids and specific lipids. serves as cofactor.

It is found in the plastid. Its subcellular location is the chloroplast thylakoid membrane. Its function is as follows. One of the components of the core complex of photosystem II (PSII). It binds chlorophyll and helps catalyze the primary light-induced photochemical processes of PSII. PSII is a light-driven water:plastoquinone oxidoreductase, using light energy to abstract electrons from H(2)O, generating O(2) and a proton gradient subsequently used for ATP formation. The sequence is that of Photosystem II CP43 reaction center protein from Solanum tuberosum (Potato).